A 293-amino-acid polypeptide reads, in one-letter code: DNA repair protein RecO (293 aa).

This sequence belongs to the RecO family.

Involved in DNA repair and RecF pathway recombination. This Acaryochloris marina (strain MBIC 11017) protein is DNA repair protein RecO.